A 124-amino-acid chain; its full sequence is Large ribosomal subunit protein bL20 (124 aa).

It belongs to the bacterial ribosomal protein bL20 family.

In terms of biological role, binds directly to 23S ribosomal RNA and is necessary for the in vitro assembly process of the 50S ribosomal subunit. It is not involved in the protein synthesizing functions of that subunit. The polypeptide is Large ribosomal subunit protein bL20 (Gemmatimonas aurantiaca (strain DSM 14586 / JCM 11422 / NBRC 100505 / T-27)).